We begin with the raw amino-acid sequence, 843 residues long: Protein PLASTID MOVEMENT IMPAIRED 1 (843 aa).

Polar residues predominate over residues Pro-30–Glu-58. 2 disordered regions span residues Pro-30–Glu-65 and Leu-88–Lys-116. The C2 NT-type domain occupies Leu-131–Ile-284. Disordered regions lie at residues Phe-300 to Gly-412 and Met-450 to Gln-472. Over residues Lys-307–Glu-336 the composition is skewed to polar residues. Residues Ser-314 and Ser-328 each carry the phosphoserine modification. Positions Pro-365 to Glu-381 are enriched in basic and acidic residues. Thr-404 bears the Phosphothreonine mark. Ser-407 is modified (phosphoserine). Thr-410 is modified (phosphothreonine). Residues Asp-456–Gln-472 show a composition bias toward acidic residues. Residue Ser-507 is modified to Phosphoserine.

As to expression, expressed in leaves, stems, cauline leaves, and flowers but not in roots. Present in leaves in both mesophyll and pavement cells.

The protein resides in the cytoplasm. Functionally, necessary for chloroplast and nuclear photorelocation movements via the regulation of chloroplast-actin (cp-actin) filaments in mesophyll cells, and together with PMIR1, in pavement cells. Required component for both the low- and high-light-dependent chloroplast movement responses via an abscisic acid (ABA) pathway. Involved in the ABA response pathway during seed germination. Modulates ABA accumulation during periods of water deficit at the seedling stage. This chain is Protein PLASTID MOVEMENT IMPAIRED 1, found in Arabidopsis thaliana (Mouse-ear cress).